A 251-amino-acid polypeptide reads, in one-letter code: Probable transcriptional regulatory protein cu0933 (251 aa).

Residues 56–79 are disordered; sequence AKKSSVPNDNIERARKRGSGEEAG.

Belongs to the TACO1 family.

The protein resides in the cytoplasm. In Corynebacterium urealyticum (strain ATCC 43042 / DSM 7109), this protein is Probable transcriptional regulatory protein cu0933.